The sequence spans 339 residues: DNA-directed RNA polymerase subunit alpha (339 aa).

The alpha N-terminal domain (alpha-NTD) stretch occupies residues 1–235 (MVIQRNWQSL…DQLQLFINFE (235 aa)). The tract at residues 251–339 (FNRNLLRKVD…DLAKRLEEPF (89 aa)) is alpha C-terminal domain (alpha-CTD).

Belongs to the RNA polymerase alpha chain family. As to quaternary structure, homodimer. The RNAP catalytic core consists of 2 alpha, 1 beta, 1 beta' and 1 omega subunit. When a sigma factor is associated with the core the holoenzyme is formed, which can initiate transcription.

The catalysed reaction is RNA(n) + a ribonucleoside 5'-triphosphate = RNA(n+1) + diphosphate. In terms of biological role, DNA-dependent RNA polymerase catalyzes the transcription of DNA into RNA using the four ribonucleoside triphosphates as substrates. The polypeptide is DNA-directed RNA polymerase subunit alpha (Granulibacter bethesdensis (strain ATCC BAA-1260 / CGDNIH1)).